The sequence spans 616 residues: MAEKQIHTFQTEVSQLLDLMIHSLYSNKEIFLRELVSNSSDAVDKLKFKSLSDDTLIEGKEELQIHINTNKDASTITITDNGIGMTEAEVNKNIGTIANSGTKKFLKSLDEKQTKDSNLIGQFGVGFYSSFIVADKVELITRKAGSKSKKGTKWTSTGKGKYSIERVNCLNFGTSVTLHIKKDEKEFLDDYRLRGIISKYSDHITVPIMMIKASEDGKDIEYERINKANAFWSQDKRDLKQENYDEFYKSLTYDFEAPLTQLHNRVEGNIDYTSLLFIPSKAPHDMWEPKRKGGIKLYAKRVFIMEDNEALMPLYLRFVKGVIDTADLPLNVSREILQGNKVVDTIRKASVSRVLKELEKMAKNKPEDYEKFWQEFGMVMKEGVVEDFANKDKIAKLLRFTTNKSESAAQTATLECYVKSMQKDQKAIYYITAETYEAAKGSPHLEIFNQKDIEVLLLSDRVDEWMVNNFGKFEDVPLKSITKGDLEGLDSKEEKKAKEEVSKNFEKVIEKMQKILDTQVKEIKVSSRLSDSPSCLVVDENEMGGNMERIMKSLGQDVPDTKPILEINPNHPLVKKLKTKIDEDLVKVLFDQAVLSEGVQLKDPAEFVKRINKLIN.

The interval 1–334 is a; substrate-binding; it reads MAEKQIHTFQ…TADLPLNVSR (334 aa). The segment at 335-549 is b; it reads EILQGNKVVD…ENEMGGNMER (215 aa). Positions 550–616 are c; sequence IMKSLGQDVP…FVKRINKLIN (67 aa).

It belongs to the heat shock protein 90 family. As to quaternary structure, homodimer.

It localises to the cytoplasm. In terms of biological role, molecular chaperone. Has ATPase activity. The polypeptide is Chaperone protein HtpG (Ruthia magnifica subsp. Calyptogena magnifica).